Here is a 730-residue protein sequence, read N- to C-terminus: Synaptotagmin-like protein 5 (730 aa).

One can recognise a RabBD domain in the interval 7–123; that stretch reads FINLSFLLDH…IITGEWFFEE (117 aa). Residues 64-106 form an FYVE-type zinc finger; it reads CVHCHRNLGLIFDRGDPCQACSLRVCRECRVAGPNGSWKCTVC. Ser147 carries the phosphoserine modification. Disordered stretches follow at residues 147-188, 217-271, and 294-355; these read SPGA…GFLL, QHFR…TRTV, and SQEL…LDKD. Polar residues-rich tracts occupy residues 248-271 and 305-322; these read PKSS…TRTV and TSGT…SSDQ. 2 C2 domains span residues 406 to 527 and 563 to 694; these read VSGE…DEWF and PPEQ…VDWM.

Binds RAB27A that has been activated by GTP-binding, and possibly also RAB3A and RAB6A. As to expression, highly expressed in placenta and liver.

It localises to the membrane. May act as Rab effector protein and play a role in vesicle trafficking. Binds phospholipids. This chain is Synaptotagmin-like protein 5 (SYTL5), found in Homo sapiens (Human).